The chain runs to 92 residues: Small ribosomal subunit protein uS19 (92 aa).

It belongs to the universal ribosomal protein uS19 family.

Functionally, protein S19 forms a complex with S13 that binds strongly to the 16S ribosomal RNA. The chain is Small ribosomal subunit protein uS19 from Klebsiella pneumoniae (strain 342).